A 261-amino-acid polypeptide reads, in one-letter code: Glutamate racemase (261 aa).

Residues 9–10 (DS) and 41–42 (YG) each bind substrate. Cysteine 73 acts as the Proton donor/acceptor in catalysis. 74 to 75 (NT) serves as a coordination point for substrate. The active-site Proton donor/acceptor is the cysteine 179. 180–181 (TH) lines the substrate pocket.

Belongs to the aspartate/glutamate racemases family.

It catalyses the reaction L-glutamate = D-glutamate. It functions in the pathway cell wall biogenesis; peptidoglycan biosynthesis. In terms of biological role, provides the (R)-glutamate required for cell wall biosynthesis. This is Glutamate racemase from Aliivibrio fischeri (strain MJ11) (Vibrio fischeri).